A 485-amino-acid polypeptide reads, in one-letter code: Probable outer membrane usher protein LpfC' (485 aa).

It belongs to the fimbrial export usher family.

The protein resides in the cell outer membrane. Part of the lpfABCC'DE fimbrial operon. LP fimbriae may participate in the interaction with eukaryotic cells by assisting in microcolony formation. Could be involved in the export and assembly of the fimbrial subunits across the outer membrane. This chain is Probable outer membrane usher protein LpfC' (lpfC'), found in Escherichia coli O157:H7.